The sequence spans 489 residues: Otolin-1-A (489 aa).

The N-terminal stretch at 1–23 (MPNILHPFIIIMTLLVVATGNQA) is a signal peptide. Residues 27-57 (KTTQWPRMKPTKKPPPRDEGPSKLGSISTTV) are disordered. N-linked (GlcNAc...) asparagine glycosylation occurs at Asn109. Residues 133-335 (GPVGEKGLPG…PGMKGTRGLK (203 aa)) form a disordered region. The span at 142-151 (GIPGGKGEMG) shows a compositional bias: gly residues. 3 consecutive Collagen-like domains span residues 145 to 204 (GGKG…KGDK), 205 to 255 (GDTG…KGDK), and 264 to 323 (GQKG…PGQR). Residues 192-206 (QGEKGESGPKGDKGD) are compositionally biased toward basic and acidic residues. N-linked (GlcNAc...) asparagine glycosylation occurs at Asn225. Gly residues predominate over residues 226-235 (GTKGGMGEPG). The span at 248–257 (IKGEKGDKGD) shows a compositional bias: basic and acidic residues. Asn287 is a glycosylation site (N-linked (GlcNAc...) asparagine). Residues 290–310 (DGLPGSKGPKGDPGPLSKQGE) are compositionally biased toward low complexity. The C1q domain maps to 351–488 (AVQKRSAFSV…GFLLYADATK (138 aa)). Asn391 and Asn396 each carry an N-linked (GlcNAc...) asparagine glycan.

Belongs to the OTOL1 family. In terms of assembly, homooligomer; disulfide-linked; probably forms homotrimers. Interacts with otomp.

The protein resides in the secreted. The protein localises to the extracellular space. It localises to the extracellular matrix. Its function is as follows. Collagen-like protein, which provides an organic scaffold for otoliths onto the sensory epithelium of the inner ear. Acts as a scaffold for biomineralization by sequestering calcium. This Danio rerio (Zebrafish) protein is Otolin-1-A (otol1a).